The chain runs to 347 residues: Autoinducer 2 import system permease protein LsrC (347 aa).

9 helical membrane passes run 14–34, 39–59, 72–92, 93–113, 115–135, 155–175, 213–233, 249–269, and 284–304; these read LLAIVCLFVFPGALDSQYLSV, MVFSSAQILMLLAIGATMVML, GMCAVLLGVMLNAGYSLPVAC, LATLILGIVAGFFNGVLVAWL, IPAIVATLGTLGLYRGIMLLW, VFLGISAIGWFTLVLALLMAW, LNGGMAALAGIVFASQIGFIP, VLGGISLLGGSGTVIGAILGA, and IPAWWNDFIAGLVLLGVLVFD.

This sequence belongs to the binding-protein-dependent transport system permease family. AraH/RbsC subfamily. In terms of assembly, the complex is composed of two ATP-binding proteins (LsrA), two transmembrane proteins (LsrC and LsrD) and a solute-binding protein (LsrB).

Its subcellular location is the cell inner membrane. In terms of biological role, part of the ABC transporter complex LsrABCD involved in autoinducer 2 (AI-2) import. Probably responsible for the translocation of the substrate across the membrane. The sequence is that of Autoinducer 2 import system permease protein LsrC (lsrC) from Salmonella paratyphi A (strain ATCC 9150 / SARB42).